The chain runs to 85 residues: Small ribosomal subunit protein uS17 (85 aa).

This sequence belongs to the universal ribosomal protein uS17 family. Part of the 30S ribosomal subunit.

Functionally, one of the primary rRNA binding proteins, it binds specifically to the 5'-end of 16S ribosomal RNA. This Aggregatibacter actinomycetemcomitans (Actinobacillus actinomycetemcomitans) protein is Small ribosomal subunit protein uS17.